The chain runs to 302 residues: Putative peptide permease protein BOV_A0350 (302 aa).

Positions 1 to 22 (MRSSIHASRLRKMGQSIPASTG) are disordered. Transmembrane regions (helical) follow at residues 38–58 (IFGLVLLTPLLFAVLTYPLWL), 101–121 (LLVAVSSVVLSTAIGFLIGAI), 147–167 (IFLLVLASIIGSGIWSTVVVI), 200–222 (AGLGHLLFRHGLPNSIDILVVYA), 230–250 (ILLEAGLSFLGLGVPPPAASW), and 268–288 (WQWLFPGGALVLAVLAINFIG). The 192-residue stretch at 97 to 288 (GRISLLVAVS…LAVLAINFIG (192 aa)) folds into the ABC transmembrane type-1 domain.

The protein belongs to the binding-protein-dependent transport system permease family. As to quaternary structure, the complex is composed of two ATP-binding proteins (BOV_A0347 and BOV_A0348), two transmembrane proteins (BOV_A0350 and BOV_A0351) and a solute-binding protein (BOV_A0352).

It localises to the cell inner membrane. In terms of biological role, probably part of an ABC transporter complex that could be involved in peptide import. Probably responsible for the translocation of the substrate across the membrane. This chain is Putative peptide permease protein BOV_A0350, found in Brucella ovis (strain ATCC 25840 / 63/290 / NCTC 10512).